The chain runs to 446 residues: Cyclin-T1-1 (446 aa).

Belongs to the cyclin family. Cyclin T subfamily.

This is Cyclin-T1-1 (CYCT1-1) from Oryza sativa subsp. japonica (Rice).